Consider the following 99-residue polypeptide: Aspartyl/glutamyl-tRNA(Asn/Gln) amidotransferase subunit C (99 aa).

Belongs to the GatC family. As to quaternary structure, heterotrimer of A, B and C subunits.

The enzyme catalyses L-glutamyl-tRNA(Gln) + L-glutamine + ATP + H2O = L-glutaminyl-tRNA(Gln) + L-glutamate + ADP + phosphate + H(+). It catalyses the reaction L-aspartyl-tRNA(Asn) + L-glutamine + ATP + H2O = L-asparaginyl-tRNA(Asn) + L-glutamate + ADP + phosphate + 2 H(+). Its function is as follows. Allows the formation of correctly charged Asn-tRNA(Asn) or Gln-tRNA(Gln) through the transamidation of misacylated Asp-tRNA(Asn) or Glu-tRNA(Gln) in organisms which lack either or both of asparaginyl-tRNA or glutaminyl-tRNA synthetases. The reaction takes place in the presence of glutamine and ATP through an activated phospho-Asp-tRNA(Asn) or phospho-Glu-tRNA(Gln). In Leptothrix cholodnii (strain ATCC 51168 / LMG 8142 / SP-6) (Leptothrix discophora (strain SP-6)), this protein is Aspartyl/glutamyl-tRNA(Asn/Gln) amidotransferase subunit C.